The primary structure comprises 328 residues: RNA-binding protein KhpB (328 aa).

The jag_N domain stretch occupies residues 3-53; the sequence is VFTGSTVEEAIQKGLKELDIPRMKAHIKVISREKKGFLGLFGKKPAQVDIE. Residues 54–180 form a linker region; that stretch reads AISETTVVKA…GLKVETNFDI (127 aa). Residue Thr-89 is modified to Phosphothreonine. The KH domain maps to 181–258; it reads EQVATEVMAY…SRTFYVTINV (78 aa). The R3H domain occupies 263–328; the sequence is EHRAEVLQTY…PNRYVVVDTE (66 aa).

Belongs to the KhpB RNA-binding protein family. As to quaternary structure, interacts with KhpA; the 2 proteins colocalize throughout the cell cycle, with some increase at midcell in dividing cells. Interacts with StkP which phosphorylates it, interacts with MltG, MreC, RodZ and YidC2. Phosphorylated on Thr-89 by StkP; there is another poorly phosphorylated residue in the protein. Dephosphorylated by PhpP.

The protein resides in the cytoplasm. Its function is as follows. A probable RNA chaperone. Forms a complex with KhpA which binds to cellular RNA and controls its expression. Plays a role in peptidoglycan (PG) homeostasis and cell length regulation. Functionally, forms a complex with KhpA which presumably binds to about 170 cellular RNAs (mRNA, tRNA intergenic RNA and sRNAs); the proteins alone each bind the same set of RNAs. Suppresses the requirement for PBP2b (penA, a transpeptidase) in peripheral peptidoglycan (PG) synthesis. May function as a pleiotropic RNA chaperone controlling pneumococcal cell division, including PG homeostasis and regulating peripheral PG synthesis by the elongasome. The chain is RNA-binding protein KhpB from Streptococcus pneumoniae serotype 2 (strain D39 / NCTC 7466).